The following is a 229-amino-acid chain: Transcriptional activator protein IrlR (229 aa).

The region spanning R2–L115 is the Response regulatory domain. D51 carries the 4-aspartylphosphate modification. Residues S123–V221 constitute a DNA-binding region (ompR/PhoB-type).

Phosphorylated by IrlS.

Functionally, member of the two-component regulatory system IrlR/IrlS. May be involved in invasion of eukaryotic cells and heavy-metal resistance. The chain is Transcriptional activator protein IrlR (irlR) from Burkholderia pseudomallei (strain 1026b).